We begin with the raw amino-acid sequence, 155 residues long: Ribosome maturation factor RimP (155 aa).

Belongs to the RimP family.

Its subcellular location is the cytoplasm. In terms of biological role, required for maturation of 30S ribosomal subunits. This is Ribosome maturation factor RimP from Gloeothece citriformis (strain PCC 7424) (Cyanothece sp. (strain PCC 7424)).